Here is a 610-residue protein sequence, read N- to C-terminus: Propanediol dehydratase-reactivating factor large subunit (610 aa).

An ATP-binding site is contributed by N11 to S13. Residues T105, D166, and D183 each coordinate Mg(2+). Residues E459–K462, G557–S558, and R591 contribute to the ATP site.

Belongs to the DdrA/PduG family. Forms a heterotetramer PduG(2)/PduH(2). Requires Mg(2+) as cofactor.

It is found in the bacterial microcompartment. It carries out the reaction ATP + H2O = ADP + phosphate + H(+). It participates in polyol metabolism; 1,2-propanediol degradation. Functionally, large subunit of the propanediol dehydratase-reactivating factor (DDR), which reactivates suicidally inhibited adenosylcobalamin-dependent propanediol dehydratase (diol dehydratase, DDH) found in the bacterial microcompartment (BMC) dedicated to 1,2-propanediol (1,2-PD) degradation. Reactivates inactivated DDH in the presence of ATP, Mg(2+) and free adenosylcobalamin (AdoCbl), by mediating the exchange of the tightly bound damaged cofactor AdoCbl for a free intact one. This subunit contains the adenosine nucleotide binding site. Its function is as follows. Expression of a cosmid containing the full 21-gene pdu operon in E.coli allows E.coli to grow on 1,2-propanediol (1,2-PD) with the appearance of bacterial microcompartments (BMC) in its cytoplasm. The 1,2-PD-specific bacterial microcompartment (BMC) concentrates low levels of 1,2-PD catabolic enzymes, concentrates volatile reaction intermediates thus enhancing pathway flux and keeps the level of toxic, mutagenic propionaldehyde low. This is Propanediol dehydratase-reactivating factor large subunit from Citrobacter freundii.